The chain runs to 291 residues: MRFVIVTGMSGAGKSLVTKYLEDIGFFCVDNLPPALIPKFAEISAQSEGKMEKIALVIDIRGGELLHDLFPALEEVKKSGFSYEILFLEADDDVLVKRYKESRRQHPLAPEGRLLLGIREERKALQTIKSKANYIIDTSTLVTRQLKQEINGIFLEGKIFKGIIINVVSFGFKYGIPTDCDLVFDVRFIPNPYYIAPMKNQTGKDQMVKEFVLNASETKEFISKLDGMLDFLIPNYIKEGKSQLDIGIGCTGGRHRSVAIADEVYRRLEEKMHSVVIEHRDIEKDGKGVGK.

Position 8-15 (8-15 (GMSGAGKS)) interacts with ATP. 59-62 (DIRG) lines the GTP pocket.

Belongs to the RapZ-like family.

In terms of biological role, displays ATPase and GTPase activities. In Ruminiclostridium cellulolyticum (strain ATCC 35319 / DSM 5812 / JCM 6584 / H10) (Clostridium cellulolyticum), this protein is Nucleotide-binding protein Ccel_2290.